Reading from the N-terminus, the 276-residue chain is MALKHFNPVTPSLRGTVLIDRKELWKGKPVKGLTEGKNKSGGRNNHGRTTSRFIGGGHKQSYRYVDFKRRKFDVVGTVERLEYDPNRTAFIALVKYEDGELAYILAPQRLKAGDQVVAGARVDIKPGNAMPLSAIPVGTIVHNIELKQGAGGKMARSAGTYAQLVGKDSGYAQIKLQSGELRVVRGECMATIGAVSNPDNMNQHMGKAGRSRWLGRRPHNRGVVMNPVDHPHGGGEGRTSGGRHPVTPWGKPTKGYKTRVNKRTDSLIIRRRKTGK.

Disordered stretches follow at residues 30 to 52 (VKGL…TTSR) and 224 to 257 (VMNP…KGYK). The segment covering 41-52 (GGRNNHGRTTSR) has biased composition (polar residues).

The protein belongs to the universal ribosomal protein uL2 family. As to quaternary structure, part of the 50S ribosomal subunit. Forms a bridge to the 30S subunit in the 70S ribosome.

Its function is as follows. One of the primary rRNA binding proteins. Required for association of the 30S and 50S subunits to form the 70S ribosome, for tRNA binding and peptide bond formation. It has been suggested to have peptidyltransferase activity; this is somewhat controversial. Makes several contacts with the 16S rRNA in the 70S ribosome. The chain is Large ribosomal subunit protein uL2 from Gluconacetobacter diazotrophicus (strain ATCC 49037 / DSM 5601 / CCUG 37298 / CIP 103539 / LMG 7603 / PAl5).